We begin with the raw amino-acid sequence, 410 residues long: Iron-sulfur cluster assembly SufBD family protein MTH_1150 (410 aa).

The protein belongs to the iron-sulfur cluster assembly SufBD family.

This chain is Iron-sulfur cluster assembly SufBD family protein MTH_1150, found in Methanothermobacter thermautotrophicus (strain ATCC 29096 / DSM 1053 / JCM 10044 / NBRC 100330 / Delta H) (Methanobacterium thermoautotrophicum).